The primary structure comprises 672 residues: uncharacterized protein (672 aa).

The span at M1–L10 shows a compositional bias: basic and acidic residues. The disordered stretch occupies residues M1–V41.

This is an uncharacterized protein from Mycobacterium bovis (strain ATCC BAA-935 / AF2122/97).